The following is a 368-amino-acid chain: tRNA-specific 2-thiouridylase MnmA (368 aa).

Residues alanine 10–serine 17 and methionine 36 contribute to the ATP site. The active-site Nucleophile is the cysteine 106. Cysteine 106 and cysteine 203 are disulfide-bonded. Residue glycine 130 coordinates ATP. The interval lysine 152–glutamine 154 is interaction with tRNA. The active-site Cysteine persulfide intermediate is the cysteine 203. Positions arginine 313–tyrosine 314 are interaction with tRNA.

This sequence belongs to the MnmA/TRMU family.

The protein resides in the cytoplasm. It carries out the reaction S-sulfanyl-L-cysteinyl-[protein] + uridine(34) in tRNA + AH2 + ATP = 2-thiouridine(34) in tRNA + L-cysteinyl-[protein] + A + AMP + diphosphate + H(+). In terms of biological role, catalyzes the 2-thiolation of uridine at the wobble position (U34) of tRNA, leading to the formation of s(2)U34. This Cytophaga hutchinsonii (strain ATCC 33406 / DSM 1761 / CIP 103989 / NBRC 15051 / NCIMB 9469 / D465) protein is tRNA-specific 2-thiouridylase MnmA.